We begin with the raw amino-acid sequence, 300 residues long: Ribosome-inactivating protein 3 (300 aa).

The active site involves E207.

It belongs to the ribosome-inactivating protein family. Type 1 RIP subfamily. As to quaternary structure, monomer. In terms of tissue distribution, accumulates to high levels in seeds.

The protein resides in the cytoplasm. It catalyses the reaction Endohydrolysis of the N-glycosidic bond at one specific adenosine on the 28S rRNA.. Possesses features of some constitutive defense agent. The coordinate Opaque-2-controlled synthesis of this protein and the major seed storage proteins (zeins) may provide the germinating seedling with both nutritional benefits and protection against pathogen invasion of the surrounding endosperm. This chain is Ribosome-inactivating protein 3 (CRIP3), found in Zea mays (Maize).